The chain runs to 1296 residues: Capping protein, Arp2/3 and myosin-I linker protein 2 (1296 aa).

LRR repeat units lie at residues 63 to 87, 88 to 110, 248 to 271, 273 to 296, 305 to 328, 363 to 386, 395 to 415, 426 to 448, 453 to 477, 480 to 506, 515 to 538, 542 to 565, 570 to 594, 598 to 621, and 836 to 859; these read DCTF…TFEL, ESLP…AQHV, ELVL…LAGH, NSGL…ALGR, DSTL…DSGG, CSSL…AAPA, TRML…ALRA, IHDL…VIQD, AGAL…VLAI, SRSL…VLHR, DCPL…LIRA, NPKL…MLAK, NTRL…VAQA, NHSL…RPEL, and TMAP…GLEE. A tropomodulin-like region spans residues 507–601; it reads IAQLMQDDDC…AQALEQNHSL (95 aa). Residues 975 to 1002 form a necessary for localization at the cell membrane region; it reads ATPVPRTLRKKLGTLFAFKKPRSTRGPR. Residues 988–1296 are disordered; that stretch reads TLFAFKKPRS…TDQRGGGPNP (309 aa). Serine 1008 bears the Phosphoserine mark. Basic and acidic residues-rich tracts occupy residues 1079 to 1091 and 1118 to 1134; these read RPDK…RGDT and ESKR…KAGS. Serine 1134 is subject to Phosphoserine. Threonine 1145 is subject to Phosphothreonine. Polar residues predominate over residues 1176 to 1185; that stretch reads TWKTLGQQLN. Arginine 1191 bears the Omega-N-methylarginine mark. Composition is skewed to pro residues over residues 1199–1209 and 1267–1285; these read PGPPSPCPSPS and PLPP…PPSP. Phosphoserine occurs at positions 1203 and 1281.

The protein belongs to the CARMIL family. As to quaternary structure, forms homodimers. Interacts (via C-terminus) with heterodimeric capping protein (CP); the interaction inhibits CP activity and hence promotes actin polymerization at the barbed end of actin filaments.

The protein localises to the cytoplasm. Its subcellular location is the cytoskeleton. It localises to the cell membrane. The protein resides in the cell projection. It is found in the lamellipodium. The protein localises to the ruffle. Cell membrane-cytoskeleton-associated protein that plays a role in the regulation of actin polymerization at the barbed end of actin filaments. Prevents F-actin heterodimeric capping protein (CP) activity at the leading edges of migrating cells, and hence generates uncapped barbed ends and enhances actin polymerization. Plays a role in cell protrusion formations; involved in cell polarity, lamellipodial assembly, membrane ruffling and macropinosome formations. Involved as well in cell migration and invadopodia formation during wound healing. Required for CD28-mediated stimulation of NF-kappa-B signaling, involved in naive T cells activation, maturation into T memory cells, and differentiation into T helper cells. Required for CD28-mediated differentiation of T regulatory cells. This chain is Capping protein, Arp2/3 and myosin-I linker protein 2, found in Mus musculus (Mouse).